The sequence spans 308 residues: Isoflavone reductase-like protein (308 aa).

Residues 11-17, Arg36, and Lys45 each bind NADP(+); that span reads GGTGYIG. Residue Lys133 is the Proton acceptor of the active site. An NADP(+)-binding site is contributed by Arg137.

This sequence belongs to the NmrA-type oxidoreductase family. Isoflavone reductase subfamily. In terms of assembly, homodimer.

The protein resides in the cytoplasm. This Olea europaea (Common olive) protein is Isoflavone reductase-like protein.